Reading from the N-terminus, the 299-residue chain is Apolipoprotein E (299 aa).

Residues 1–18 (MKVLCTVLVVTLLAGCQA) form the signal peptide. Residues 74-245 (VLMEDTMKAV…RLEEVREQME (172 aa)) form an 8 X 22 AA approximate tandem repeats region. Tandem repeats lie at residues 75-95 (LMED…QELV), 96-117 (PMAE…ARLG), 118-139 (ADME…AMLG), 140-161 (QSAE…KKLL), 162-183 (RDAE…EGAE), 184-206 (RSVS…RAAL), 207-225 (TSQP…LRGR), and 224-242 (GRLE…EVRE). M137 is subject to Methionine sulfoxide. S141 bears the Phosphoserine mark. The segment at 152-162 (HLRKLRKKLLR) is LDL and other lipoprotein receptors binding. 156–159 (LRKK) lines the heparin pocket. The lipid-binding and lipoprotein association stretch occupies residues 205-273 (ALTSQPLQER…GWFEPMVEDM (69 aa)). 219-226 (GKRLRGRL) contacts heparin. The tract at residues 261 to 273 (RLKGWFEPMVEDM) is specificity for association with VLDL.

This sequence belongs to the apolipoprotein A1/A4/E family. As to quaternary structure, homotetramer. May interact with ABCA1; functionally associated with ABCA1 in the biogenesis of HDLs. May interact with APP/A4 amyloid-beta peptide; the interaction is extremely stable in vitro but its physiological significance is unclear. May interact with MAPT. May interact with MAP2. In the cerebrospinal fluid, interacts with secreted SORL1. Interacts with PMEL; this allows the loading of PMEL luminal fragment on ILVs to induce fibril nucleation. In terms of processing, APOE exists as multiple glycosylated and sialylated glycoforms within cells and in plasma. The extent of glycosylation and sialylation are tissue and context specific. Post-translationally, glycated in plasma VLDL. Phosphorylated by FAM20C in the extracellular medium.

The protein resides in the secreted. The protein localises to the extracellular space. Its subcellular location is the extracellular matrix. It is found in the extracellular vesicle. It localises to the endosome. The protein resides in the multivesicular body. Its function is as follows. APOE is an apolipoprotein, a protein associating with lipid particles, that mainly functions in lipoprotein-mediated lipid transport between organs via the plasma and interstitial fluids. APOE is a core component of plasma lipoproteins and is involved in their production, conversion and clearance. Apolipoproteins are amphipathic molecules that interact both with lipids of the lipoprotein particle core and the aqueous environment of the plasma. As such, APOE associates with chylomicrons, chylomicron remnants, very low density lipoproteins (VLDL) and intermediate density lipoproteins (IDL) but shows a preferential binding to high-density lipoproteins (HDL). It also binds a wide range of cellular receptors including the LDL receptor/LDLR, the LDL receptor-related proteins LRP1, LRP2 and LRP8 and the very low-density lipoprotein receptor/VLDLR that mediate the cellular uptake of the APOE-containing lipoprotein particles. Finally, APOE also has a heparin-binding activity and binds heparan-sulfate proteoglycans on the surface of cells, a property that supports the capture and the receptor-mediated uptake of APOE-containing lipoproteins by cells. A main function of APOE is to mediate lipoprotein clearance through the uptake of chylomicrons, VLDLs, and HDLs by hepatocytes. APOE is also involved in the biosynthesis by the liver of VLDLs as well as their uptake by peripheral tissues ensuring the delivery of triglycerides and energy storage in muscle, heart and adipose tissues. By participating in the lipoprotein-mediated distribution of lipids among tissues, APOE plays a critical role in plasma and tissues lipid homeostasis. APOE is also involved in two steps of reverse cholesterol transport, the HDLs-mediated transport of cholesterol from peripheral tissues to the liver, and thereby plays an important role in cholesterol homeostasis. First, it is functionally associated with ABCA1 in the biogenesis of HDLs in tissues. Second, it is enriched in circulating HDLs and mediates their uptake by hepatocytes. APOE also plays an important role in lipid transport in the central nervous system, regulating neuron survival and sprouting. This chain is Apolipoprotein E (APOE), found in Ctenomys sociabilis (Social tuco-tuco).